The following is a 917-amino-acid chain: MLX-interacting protein (917 aa).

Residues 1-72 form a disordered region; sequence MAADVFMCSP…AGPGREEPPR (72 aa). N-acetylalanine is present on alanine 2. Serine 9, serine 33, and serine 39 each carry phosphoserine. Positions 27 to 37 are enriched in acidic residues; sequence PEDDDDSDTDE. Residues 47-57 show a composition bias toward low complexity; sequence ATSARAHASAA. The tract at residues 73-327 is required for cytoplasmic localization; the sequence is RQQIIHSGHF…PLQPNLDFMD (255 aa). The interval 322 to 445 is transactivation domain; the sequence is NLDFMDTFEP…LLSPGPAPAP (124 aa). 2 disordered regions span residues 347–402 and 632–711; these read LPPP…CERT and SHST…TDPK. Residues 378–388 are compositionally biased toward polar residues; sequence LPNSLITSSAA. The span at 632–643 shows a compositional bias: low complexity; sequence SHSTSSQPSPVS. Serine 667 is modified (phosphoserine). The segment covering 670-685 has biased composition (polar residues); that stretch reads VPATGSSRDCPNSGQA. Residues 686-704 show a composition bias toward low complexity; it reads SPCPSEQSPSPQSPQNNCS. A bHLH domain is found at 717 to 767; that stretch reads KNRQKHISAEQKRRFNIRMGFNTLNSLISNNSKQTSHAITLQKTMEYITKL. Residues 767–788 form a leucine-zipper region; sequence LQQERMQMQEEARRLREEIEEL. The mediates heterotypic interactions between MLXIP and MLX and is required for cytoplasmic localization stretch occupies residues 830 to 879; it reads WKFWIFSMIIKPLFESFKGMVSTSSLEEFHRTALSWLDQHCSLPVLRPMV. A disordered region spans residues 897–917; the sequence is SQLPEQASEAVTRMGKRSGES.

In terms of assembly, efficient DNA binding requires dimerization with another bHLH protein. Binds DNA as a homodimer or a heterodimer with MLX/TCFL4.

Its subcellular location is the cytoplasm. The protein resides in the nucleus. The protein localises to the mitochondrion outer membrane. In terms of biological role, binds DNA as a heterodimer with MLX/TCFL4 and activates transcription. Binds to the canonical E box sequence 5'-CACGTG-3'. Plays a role in transcriptional activation of glycolytic target genes. Involved in glucose-responsive gene regulation. Regulates transcription in response to changes in cellular carbohydrate abundance such as occurs during fasting to feeding metabolic transition. Refeeding stimulates MLXIPL/ChREBP transcription factor, leading to increased BCKDK to PPM1K expression ratio, phosphorylation and activation of ACLY that ultimately results in the generation of malonyl-CoA and oxaloacetate immediate substrates of de novo lipogenesis and gluconeogenesis, respectively. The sequence is that of MLX-interacting protein from Mus musculus (Mouse).